Here is a 238-residue protein sequence, read N- to C-terminus: NAD(P)H-quinone oxidoreductase subunit K 1 (238 aa).

Cys-54, Cys-55, Cys-119, and Cys-150 together coordinate [4Fe-4S] cluster.

This sequence belongs to the complex I 20 kDa subunit family. NDH-1 can be composed of about 15 different subunits; different subcomplexes with different compositions have been identified which probably have different functions. It depends on [4Fe-4S] cluster as a cofactor.

It localises to the cellular thylakoid membrane. It catalyses the reaction a plastoquinone + NADH + (n+1) H(+)(in) = a plastoquinol + NAD(+) + n H(+)(out). It carries out the reaction a plastoquinone + NADPH + (n+1) H(+)(in) = a plastoquinol + NADP(+) + n H(+)(out). Its function is as follows. NDH-1 shuttles electrons from an unknown electron donor, via FMN and iron-sulfur (Fe-S) centers, to quinones in the respiratory and/or the photosynthetic chain. The immediate electron acceptor for the enzyme in this species is believed to be plastoquinone. Couples the redox reaction to proton translocation, and thus conserves the redox energy in a proton gradient. Cyanobacterial NDH-1 also plays a role in inorganic carbon-concentration. This is NAD(P)H-quinone oxidoreductase subunit K 1 from Cyanothece sp. (strain PCC 7425 / ATCC 29141).